Here is a 557-residue protein sequence, read N- to C-terminus: Potassium-transporting ATPase potassium-binding subunit (557 aa).

Transmembrane regions (helical) follow at residues 5–25 (GFLL…PLGS), 63–83 (LSAI…MLLG), 132–152 (GLTV…FALI), 170–190 (LLRI…LFFI), 253–273 (FVQM…FGEV), 283–303 (LLWA…WAEV), 329–349 (VLVS…AVIA), 356–376 (ALGG…FGGV), 379–399 (GLYG…LMIG), 416–436 (LTAL…ALAM), 484–504 (LLAL…MAIA), and 526–546 (LFVG…FIPA).

The protein belongs to the KdpA family. In terms of assembly, the system is composed of three essential subunits: KdpA, KdpB and KdpC.

It is found in the cell inner membrane. In terms of biological role, part of the high-affinity ATP-driven potassium transport (or Kdp) system, which catalyzes the hydrolysis of ATP coupled with the electrogenic transport of potassium into the cytoplasm. This subunit binds the periplasmic potassium ions and delivers the ions to the membrane domain of KdpB through an intramembrane tunnel. The protein is Potassium-transporting ATPase potassium-binding subunit of Escherichia coli (strain UTI89 / UPEC).